A 631-amino-acid chain; its full sequence is DNA ligase (631 aa).

NAD(+) contacts are provided by residues 37-41 (DAHYD) and 79-80 (ST). Lys115 acts as the N6-AMP-lysine intermediate in catalysis. 3 residues coordinate NAD(+): Arg131, Glu160, and Lys272. Cys361, Cys364, Cys377, and Cys382 together coordinate Zn(2+). One can recognise a BRCT domain in the interval 539-630 (DVSSPISGKG…SQSSPEQMSL (92 aa)).

The protein belongs to the NAD-dependent DNA ligase family. LigA subfamily. Mg(2+) serves as cofactor. The cofactor is Mn(2+).

The enzyme catalyses NAD(+) + (deoxyribonucleotide)n-3'-hydroxyl + 5'-phospho-(deoxyribonucleotide)m = (deoxyribonucleotide)n+m + AMP + beta-nicotinamide D-nucleotide.. Functionally, DNA ligase that catalyzes the formation of phosphodiester linkages between 5'-phosphoryl and 3'-hydroxyl groups in double-stranded DNA using NAD as a coenzyme and as the energy source for the reaction. It is essential for DNA replication and repair of damaged DNA. The protein is DNA ligase of Desulfatibacillum aliphaticivorans.